The primary structure comprises 138 residues: Transcription antitermination protein NusB (138 aa).

Belongs to the NusB family.

Its function is as follows. Involved in transcription antitermination. Required for transcription of ribosomal RNA (rRNA) genes. Binds specifically to the boxA antiterminator sequence of the ribosomal RNA (rrn) operons. The polypeptide is Transcription antitermination protein NusB (Limosilactobacillus reuteri (strain DSM 20016) (Lactobacillus reuteri)).